The chain runs to 1157 residues: Endo-1,4-beta-xylanase A (1157 aa).

Residues 1-33 (MMKNNVDRIVSIVTALIMIFGASLFSPPIRVFA) form the signal peptide. CBM-cenC domains lie at 38–189 (INLV…VTTQ) and 195–343 (GNVI…VIGE). In terms of domain architecture, GH10 spans 352-675 (QNDIPDLYSV…KPAFWAVVDP (324 aa)). Catalysis depends on Glu495, which acts as the Proton donor. Asp537 is an active-site residue. Glu600 (nucleophile) is an active-site residue. 2 consecutive SLH domains span residues 1051–1114 (KKGV…YSGE) and 1115–1157 (FSDV…EMTQ).

The protein belongs to the glycosyl hydrolase 10 (cellulase F) family.

It carries out the reaction Endohydrolysis of (1-&gt;4)-beta-D-xylosidic linkages in xylans.. Its pathway is glycan degradation; xylan degradation. Endo-acting enzyme that randomly cleaves the internal xylosidic linkages of the xylan backbone, yielding xylooligosaccharides of various lengths which are further hydrolyzed to xylose molecules by beta-xylosidase (EC 3.2.1.37). Requires at least three xylose residues for catalytic activity. Does not have activity against xylobiose. The protein is Endo-1,4-beta-xylanase A (xynA) of Thermoanaerobacterium saccharolyticum.